Here is a 184-residue protein sequence, read N- to C-terminus: uncharacterized protein (184 aa).

This sequence belongs to the eIF-2B alpha/beta/delta subunits family.

This is an uncharacterized protein from Rhodospirillum rubrum.